Reading from the N-terminus, the 291-residue chain is 4-diphosphocytidyl-2-C-methyl-D-erythritol kinase (291 aa).

The active site involves Lys-11. 97–107 (PVAAGIGGGSS) lines the ATP pocket. Asp-139 is an active-site residue.

This sequence belongs to the GHMP kinase family. IspE subfamily.

The enzyme catalyses 4-CDP-2-C-methyl-D-erythritol + ATP = 4-CDP-2-C-methyl-D-erythritol 2-phosphate + ADP + H(+). Its pathway is isoprenoid biosynthesis; isopentenyl diphosphate biosynthesis via DXP pathway; isopentenyl diphosphate from 1-deoxy-D-xylulose 5-phosphate: step 3/6. Its function is as follows. Catalyzes the phosphorylation of the position 2 hydroxy group of 4-diphosphocytidyl-2C-methyl-D-erythritol. In Methylorubrum extorquens (strain CM4 / NCIMB 13688) (Methylobacterium extorquens), this protein is 4-diphosphocytidyl-2-C-methyl-D-erythritol kinase.